The primary structure comprises 293 residues: Acetyl-coenzyme A carboxylase carboxyl transferase subunit beta (293 aa).

Residues 29-293 form the CoA carboxyltransferase N-terminal domain; that stretch reads LWSKCPECGQ…GCKPMELTSA (265 aa). Zn(2+)-binding residues include Cys-33, Cys-36, Cys-52, and Cys-55. The C4-type zinc-finger motif lies at 33 to 55; that stretch reads CPECGQVVYLKDLKLNASVCANC.

The protein belongs to the AccD/PCCB family. In terms of assembly, acetyl-CoA carboxylase is a heterohexamer composed of biotin carboxyl carrier protein (AccB), biotin carboxylase (AccC) and two subunits each of ACCase subunit alpha (AccA) and ACCase subunit beta (AccD). It depends on Zn(2+) as a cofactor.

The protein resides in the cytoplasm. The enzyme catalyses N(6)-carboxybiotinyl-L-lysyl-[protein] + acetyl-CoA = N(6)-biotinyl-L-lysyl-[protein] + malonyl-CoA. It functions in the pathway lipid metabolism; malonyl-CoA biosynthesis; malonyl-CoA from acetyl-CoA: step 1/1. Its function is as follows. Component of the acetyl coenzyme A carboxylase (ACC) complex. Biotin carboxylase (BC) catalyzes the carboxylation of biotin on its carrier protein (BCCP) and then the CO(2) group is transferred by the transcarboxylase to acetyl-CoA to form malonyl-CoA. This is Acetyl-coenzyme A carboxylase carboxyl transferase subunit beta from Synechococcus sp. (strain CC9605).